Here is a 935-residue protein sequence, read N- to C-terminus: Epstein-Barr nuclear antigen 3 (935 aa).

Disordered stretches follow at residues 1–89 (MDKD…DLPG), 342–373 (HVEG…VSRG), 399–446 (TEQG…VPEP), 611–634 (KQAS…MEGP), and 883–908 (HGRP…DHEP). Over residues 10-19 (ALDDNMEEEV) the composition is skewed to acidic residues. Residues 20–29 (PSTSVVQEQV) are compositionally biased toward polar residues. Positions 352 to 366 (EESEDTESDGDDEDL) are enriched in acidic residues. Basic and acidic residues predominate over residues 399-410 (TEQGKEVLEKAR). The segment covering 431 to 440 (SDETATSHGS) has biased composition (polar residues). Low complexity predominate over residues 615–630 (VEVQPPQVTQVSPQQP).

This sequence belongs to the herpesviridae EBNA-3 family. Interacts with human UCKL1. Interacts with host CTPB1; this interaction seems important for EBNA3-mediated transcriptional repression. Interacts with host RBPJ. Interacts with host USP12 and WDR48; these interactions form a deubiquitination-competent complex.

The protein resides in the host nucleus matrix. In terms of biological role, plays an essential role for activation and immortalization of human B-cells. Represses transcription of viral promoters TP1 and Cp through interaction with host RBPJ, and inhibits EBNA2-mediated activation of these promoters. Since Cp is the promoter for all EBNA mRNAs, EBNA3A probably contributes to a negative autoregulatory control loop. The sequence is that of Epstein-Barr nuclear antigen 3 (EBNA3) from Homo sapiens (Human).